Consider the following 146-residue polypeptide: Ribosomal RNA large subunit methyltransferase H (146 aa).

S-adenosyl-L-methionine contacts are provided by residues L62, G94, and 113–118 (LGELTL).

Belongs to the RNA methyltransferase RlmH family. In terms of assembly, homodimer.

The protein resides in the cytoplasm. The catalysed reaction is pseudouridine(1915) in 23S rRNA + S-adenosyl-L-methionine = N(3)-methylpseudouridine(1915) in 23S rRNA + S-adenosyl-L-homocysteine + H(+). In terms of biological role, specifically methylates the pseudouridine at position 1915 (m3Psi1915) in 23S rRNA. This chain is Ribosomal RNA large subunit methyltransferase H, found in Deinococcus radiodurans (strain ATCC 13939 / DSM 20539 / JCM 16871 / CCUG 27074 / LMG 4051 / NBRC 15346 / NCIMB 9279 / VKM B-1422 / R1).